A 414-amino-acid polypeptide reads, in one-letter code: Gamma-glutamyl phosphate reductase (414 aa).

Belongs to the gamma-glutamyl phosphate reductase family.

The protein resides in the cytoplasm. The enzyme catalyses L-glutamate 5-semialdehyde + phosphate + NADP(+) = L-glutamyl 5-phosphate + NADPH + H(+). It participates in amino-acid biosynthesis; L-proline biosynthesis; L-glutamate 5-semialdehyde from L-glutamate: step 2/2. In terms of biological role, catalyzes the NADPH-dependent reduction of L-glutamate 5-phosphate into L-glutamate 5-semialdehyde and phosphate. The product spontaneously undergoes cyclization to form 1-pyrroline-5-carboxylate. The protein is Gamma-glutamyl phosphate reductase of Limosilactobacillus reuteri (strain DSM 20016) (Lactobacillus reuteri).